Here is a 211-residue protein sequence, read N- to C-terminus: WUSCHEL-related homeobox 14 (211 aa).

The segment at residues 91 to 155 (STRHRWTPTS…NRRARSKRKQ (65 aa)) is a DNA-binding region (homeobox; WUS-type). Residues 147–183 (RRARSKRKQPQTTTANGQADDVAVTTEERRSCGDSGG) form a disordered region.

Belongs to the WUS homeobox family. As to expression, expressed in root vasculature, pericycle and stamen. Expressed in the procambium during stem maturation.

The protein resides in the nucleus. Acts redundantly with WOX4 downstream of the TDR/PXY receptor kinase to regulate procambial cell proliferation and differentiation in vascular tissue, independently of any role in vascular. Involved in the regulation of gibberellin (GA) biosynthesis pathway. Positively regulates the expression of the GA biosynthesis gene GA3OX1, and negatively regulates the expression of GA2OX1 during secondary growth, which increases bioactive GA content in the inflorescence stem. Promotes vascular cell differentiation in the inflorescence stem. Functionally, transcription factor which may be involved in developmental processes. The polypeptide is WUSCHEL-related homeobox 14 (WOX14) (Arabidopsis thaliana (Mouse-ear cress)).